A 409-amino-acid polypeptide reads, in one-letter code: Histone deacetylase 7 (409 aa).

Residues 11-324 (RVSYFYEPMI…WCYETAIAVG (314 aa)) form a histone deacetylase region. His148 acts as the Proton donor/acceptor in catalysis. Asp267 lines the Zn(2+) pocket. The interval 383-409 (PFQDTPSSSQATEAAEVDMEKRNDPRI) is disordered. Polar residues predominate over residues 384 to 394 (FQDTPSSSQAT). The segment covering 400–409 (DMEKRNDPRI) has biased composition (basic and acidic residues).

This sequence belongs to the histone deacetylase family. HD type 1 subfamily. The cofactor is Zn(2+). As to expression, low expression in flowers.

The protein resides in the nucleus. The catalysed reaction is N(6)-acetyl-L-lysyl-[histone] + H2O = L-lysyl-[histone] + acetate. Its function is as follows. Responsible for the deacetylation of lysine residues on the N-terminal part of the core histones (H2A, H2B, H3 and H4). Histone deacetylation gives a tag for epigenetic repression and plays an important role in transcriptional regulation, cell cycle progression and developmental events. May be involved in flowering induction. Histone deacetylases act via the formation of large multiprotein complexes. The chain is Histone deacetylase 7 (HDA7) from Arabidopsis thaliana (Mouse-ear cress).